A 681-amino-acid chain; its full sequence is Oligopeptidase A (681 aa).

Position 470 (H470) interacts with Zn(2+). E471 is a catalytic residue. Zn(2+) contacts are provided by H474 and H477.

The protein belongs to the peptidase M3 family. The cofactor is Zn(2+).

The enzyme catalyses Hydrolysis of oligopeptides, with broad specificity. Gly or Ala commonly occur as P1 or P1' residues, but more distant residues are also important, as is shown by the fact that Z-Gly-Pro-Gly-|-Gly-Pro-Ala is cleaved, but not Z-(Gly)(5).. Functionally, may play a specific role in the degradation of signal peptides after they are released from precursor forms of secreted proteins. Can cleave N-acetyl-L-Ala(4). The chain is Oligopeptidase A (prlC) from Haemophilus influenzae (strain ATCC 51907 / DSM 11121 / KW20 / Rd).